Here is a 210-residue protein sequence, read N- to C-terminus: ESCRT-III complex subunit did4 (210 aa).

The tract at residues 1–38 (MGLTSWLFGGGKSPQEQLRAHQRSLGRAERELDRERTK) is disordered. Residues 15-97 (QEQLRAHQRS…AISLRLQTMR (83 aa)) adopt a coiled-coil conformation. The segment covering 26–38 (GRAERELDRERTK) has biased composition (basic and acidic residues).

It belongs to the SNF7 family. Core component of the ESCRT-III complex (endosomal sorting required for transport complex III). ESCRT-III appears to be sequentially assembled as a flat lattice on the endosome membrane.

Its subcellular location is the cytoplasm. It localises to the endosome membrane. Functionally, required for the sorting and concentration of proteins resulting in the entry of these proteins into the invaginating vesicles of the multivesicular body (MVB). Acts a component of the ESCRT-III complex, which appears to be critical for late steps in MVB sorting, such as membrane invagination and final cargo sorting and recruitment of late-acting components of the sorting machinery. The MVB pathway requires the sequential function of ESCRT-O, -I,-II and -III complex assemblies. The protein is ESCRT-III complex subunit did4 (did4) of Schizosaccharomyces pombe (strain 972 / ATCC 24843) (Fission yeast).